Reading from the N-terminus, the 177-residue chain is 18.9 kDa heat shock protein (177 aa).

A disordered region spans residues 1-35 (MSMITSMLGRKQNAQQKGGGGGGRTGGGGGGEIEP). The segment covering 17–32 (KGGGGGGRTGGGGGGE) has biased composition (gly residues). Residues 63–177 (AAGVPSTASM…PHARIIPITN (115 aa)) form the sHSP domain.

It belongs to the small heat shock protein (HSP20) family. May form oligomeric structures.

Its subcellular location is the cytoplasm. The polypeptide is 18.9 kDa heat shock protein (HSP18.9) (Oryza sativa subsp. japonica (Rice)).